The chain runs to 314 residues: ATP synthase gamma chain (314 aa).

Belongs to the ATPase gamma chain family. F-type ATPases have 2 components, CF(1) - the catalytic core - and CF(0) - the membrane proton channel. CF(1) has five subunits: alpha(3), beta(3), gamma(1), delta(1), epsilon(1). CF(0) has three main subunits: a, b and c.

It localises to the cell membrane. Its function is as follows. Produces ATP from ADP in the presence of a proton gradient across the membrane. The gamma chain is believed to be important in regulating ATPase activity and the flow of protons through the CF(0) complex. The protein is ATP synthase gamma chain of Limosilactobacillus reuteri (strain DSM 20016) (Lactobacillus reuteri).